Here is a 368-residue protein sequence, read N- to C-terminus: MFLKQVWLEQYRNIQKACIQPARHLTVLYGRNGQGKTNFLESLYLLGNARPFRAAKVPDLISHGSRSAAVRGLVLAAGVESTIVLHVENSTRRVTIDDKAVHRAADLHGKLAVVVFSPDDTAMVKLGPETRRRYLDRSLYASDAAFLSDYHTYYRILKQRNALLKTNQQAGLDLWTEQLATAGIRLMQHRQHYTSRLNQLLQQKYQQIAGEQEKVSVVYQPDVICTAEENGTELLLNVFRNQHEQDLRYKSTGRGPHRDDLLFSIGDRPLKSFGSQGQQRSFVLALKMAELDHLQETFGEMPLLLLDDIASELDRERMTNLLSYVRQREVQVLITTTDVTPFLPVLQQDSKLFRVEEGRLTYEGNGTP.

30–37 (GRNGQGKT) serves as a coordination point for ATP.

The protein belongs to the RecF family.

It is found in the cytoplasm. The RecF protein is involved in DNA metabolism; it is required for DNA replication and normal SOS inducibility. RecF binds preferentially to single-stranded, linear DNA. It also seems to bind ATP. The chain is DNA replication and repair protein RecF from Trichlorobacter lovleyi (strain ATCC BAA-1151 / DSM 17278 / SZ) (Geobacter lovleyi).